Consider the following 258-residue polypeptide: 5'-nucleotidase SurE (258 aa).

Positions 18, 19, 49, and 102 each coordinate a divalent metal cation.

Belongs to the SurE nucleotidase family. Requires a divalent metal cation as cofactor.

The protein localises to the cytoplasm. It catalyses the reaction a ribonucleoside 5'-phosphate + H2O = a ribonucleoside + phosphate. Its function is as follows. Nucleotidase that shows phosphatase activity on nucleoside 5'-monophosphates. In Vibrio parahaemolyticus serotype O3:K6 (strain RIMD 2210633), this protein is 5'-nucleotidase SurE.